We begin with the raw amino-acid sequence, 294 residues long: N-acetylmuramic acid 6-phosphate etherase (294 aa).

The SIS domain occupies 54 to 217 (VIASFRKGGR…STTSMIGVGK (164 aa)). The Proton donor role is filled by E82. Residue E113 is part of the active site.

The protein belongs to the GCKR-like family. MurNAc-6-P etherase subfamily. In terms of assembly, homodimer.

It carries out the reaction N-acetyl-D-muramate 6-phosphate + H2O = N-acetyl-D-glucosamine 6-phosphate + (R)-lactate. It participates in amino-sugar metabolism; N-acetylmuramate degradation. Its function is as follows. Specifically catalyzes the cleavage of the D-lactyl ether substituent of MurNAc 6-phosphate, producing GlcNAc 6-phosphate and D-lactate. This Exiguobacterium sp. (strain ATCC BAA-1283 / AT1b) protein is N-acetylmuramic acid 6-phosphate etherase.